We begin with the raw amino-acid sequence, 432 residues long: Ornithine aminotransferase, mitochondrial (432 aa).

An N6-(pyridoxal phosphate)lysine modification is found at Lys-287.

The protein belongs to the class-III pyridoxal-phosphate-dependent aminotransferase family. In terms of assembly, homotetramer. Requires pyridoxal 5'-phosphate as cofactor.

Its subcellular location is the mitochondrion matrix. The enzyme catalyses a 2-oxocarboxylate + L-ornithine = L-glutamate 5-semialdehyde + an L-alpha-amino acid. It functions in the pathway amino-acid biosynthesis; L-proline biosynthesis; L-glutamate 5-semialdehyde from L-ornithine: step 1/1. This Drosophila ananassae (Fruit fly) protein is Ornithine aminotransferase, mitochondrial (Oat).